Consider the following 242-residue polypeptide: tRNA (guanine-N(1)-)-methyltransferase (242 aa).

S-adenosyl-L-methionine-binding positions include Gly-115 and 134–139; that span reads LGDFVL. Basic and acidic residues predominate over residues 210-224; it reads QEQREQRTAARRPDL. The segment at 210-242 is disordered; that stretch reads QEQREQRTAARRPDLMQRWQQRFGADNDSEHRA.

This sequence belongs to the RNA methyltransferase TrmD family. Homodimer.

The protein localises to the cytoplasm. The catalysed reaction is guanosine(37) in tRNA + S-adenosyl-L-methionine = N(1)-methylguanosine(37) in tRNA + S-adenosyl-L-homocysteine + H(+). Specifically methylates guanosine-37 in various tRNAs. In Synechococcus sp. (strain WH7803), this protein is tRNA (guanine-N(1)-)-methyltransferase.